The sequence spans 372 residues: Proline-rich P65 protein homolog (372 aa).

The segment covering 1–37 (MEKNRSAFQQNQQASNQPFNQDQNQYYQDPNQQQFNQ) has biased composition (low complexity). The tract at residues 1–100 (MEKNRSAFQQ…GFDPNQQYYQ (100 aa)) is disordered. Tandem repeats lie at residues 29-40 (DPNQQQFNQSGF), 41-52 (DPNQQQFNQPGF), 53-60 (DPNQQYYQ), 61-72 (DPNQQQFNQAGF), 73-80 (DQNQQYYQ), 81-92 (DPNQQQFNQPGF), 93-100 (DPNQQYYQ), 101-112 (DPNQQQFNQAGF), 113-119 (DQNQYYQ), 120-131 (DPNQQQFNQSGF), 132-138 (DQNQYYQ), 139-150 (DPNQQQFNQPSF), and 151-162 (DLNNQQFNQPGF). Positions 38 to 49 (SGFDPNQQQFNQ) are enriched in polar residues. Residues 53–100 (DPNQQYYQDPNQQQFNQAGFDQNQQYYQDPNQQQFNQPGFDPNQQYYQ) show a composition bias toward low complexity. The tract at residues 122–150 (NQQQFNQSGFDQNQYYQDPNQQQFNQPSF) is disordered.

In Mycoplasma genitalium (strain ATCC 33530 / DSM 19775 / NCTC 10195 / G37) (Mycoplasmoides genitalium), this protein is Proline-rich P65 protein homolog.